Here is a 117-residue protein sequence, read N- to C-terminus: DNA-binding protein VNG_2008H (117 aa).

Positions 1–59 (MSGNPDDDRLEELRQRKKEQLKQQQQGGDAEREAQQQQAQQAEQQKQAMLKQNLTDGAR) are disordered. The span at 11–21 (EELRQRKKEQL) shows a compositional bias: basic and acidic residues. The segment covering 35 to 48 (QQQQAQQAEQQKQA) has biased composition (low complexity).

The protein belongs to the PDCD5 family.

The polypeptide is DNA-binding protein VNG_2008H (Halobacterium salinarum (strain ATCC 700922 / JCM 11081 / NRC-1) (Halobacterium halobium)).